The chain runs to 176 residues: 3-hydroxyacyl-[acyl-carrier-protein] dehydratase FabZ (176 aa).

Histidine 54 is a catalytic residue.

Belongs to the thioester dehydratase family. FabZ subfamily.

The protein resides in the cytoplasm. It catalyses the reaction a (3R)-hydroxyacyl-[ACP] = a (2E)-enoyl-[ACP] + H2O. Its function is as follows. Involved in unsaturated fatty acids biosynthesis. Catalyzes the dehydration of short chain beta-hydroxyacyl-ACPs and long chain saturated and unsaturated beta-hydroxyacyl-ACPs. The sequence is that of 3-hydroxyacyl-[acyl-carrier-protein] dehydratase FabZ from Yersinia pseudotuberculosis serotype O:1b (strain IP 31758).